We begin with the raw amino-acid sequence, 85 residues long: Neurotoxin beta-KTx 14.3 (85 aa).

Positions 1–20 (MKQYIFFLALIVLTATFAEA) are cleaved as a signal peptide. Positions 21 to 37 (GKKTEILDKVKKVFSKG) are excised as a propeptide. In terms of domain architecture, BetaSPN-type CS-alpha/beta spans 49-85 (ELGCPFIEKWCEDHCESKKQVGKCENFDCSCVKLGGK). Intrachain disulfides connect Cys-52–Cys-72, Cys-59–Cys-77, and Cys-63–Cys-79.

It belongs to the long chain scorpion toxin family. Class 2 subfamily. In terms of tissue distribution, expressed by the venom gland.

The protein localises to the secreted. Functionally, toxin with activity on voltage-gated potassium channels. Moderately and reversibly blocks up to 50% of the activity of Kv7.1/KCNQ1 (tested at 22 uM). 3D-structure modeling of the KCNQ1-toxin complex shows that the toxin interacts with the channel pore domain. Additionally, shows a very weak effect to block voltage-gated potassium channel Kv1.1/KCNA1. Its function is as follows. Has a very weak effect to block voltage-gated potassium channel Kv1.1/KCNA1. This Lychas mucronatus (Chinese swimming scorpion) protein is Neurotoxin beta-KTx 14.3.